We begin with the raw amino-acid sequence, 310 residues long: Probable manganese-dependent inorganic pyrophosphatase (310 aa).

Residues histidine 9, aspartate 13, aspartate 15, aspartate 76, histidine 98, and aspartate 150 each contribute to the Mn(2+) site.

Belongs to the PPase class C family. Homodimer. It depends on Mn(2+) as a cofactor.

Its subcellular location is the cytoplasm. It catalyses the reaction diphosphate + H2O = 2 phosphate + H(+). This Streptococcus mutans serotype c (strain ATCC 700610 / UA159) protein is Probable manganese-dependent inorganic pyrophosphatase (ppaC).